The chain runs to 417 residues: NADH-quinone oxidoreductase subunit D (417 aa).

It belongs to the complex I 49 kDa subunit family. As to quaternary structure, NDH-1 is composed of 14 different subunits. Subunits NuoB, C, D, E, F, and G constitute the peripheral sector of the complex.

The protein resides in the cell inner membrane. The enzyme catalyses a quinone + NADH + 5 H(+)(in) = a quinol + NAD(+) + 4 H(+)(out). NDH-1 shuttles electrons from NADH, via FMN and iron-sulfur (Fe-S) centers, to quinones in the respiratory chain. The immediate electron acceptor for the enzyme in this species is believed to be ubiquinone. Couples the redox reaction to proton translocation (for every two electrons transferred, four hydrogen ions are translocated across the cytoplasmic membrane), and thus conserves the redox energy in a proton gradient. The polypeptide is NADH-quinone oxidoreductase subunit D (Leptothrix cholodnii (strain ATCC 51168 / LMG 8142 / SP-6) (Leptothrix discophora (strain SP-6))).